Consider the following 1111-residue polypeptide: Serine/threonine-protein kinase Nek10 (1111 aa).

Positions 1–16 (MPDQDTKAKSTEKTAD) are enriched in basic and acidic residues. Disordered regions lie at residues 1–24 (MPDQ…TTTR) and 47–72 (AINF…HRAR). The span at 47 to 63 (AINFDSAQNNMTKSEPT) shows a compositional bias: polar residues. Residues 481 to 514 (YKDLVSQLNLLLEDELKQIAENIESINQKKAPLK) are a coiled coil. One can recognise a Protein kinase domain in the interval 519-791 (YAVLDHLGSG…MISDVMMKYL (273 aa)). Residues 525–533 (LGSGAFGCV) and Lys-548 contribute to the ATP site. Catalysis depends on Asp-655, which acts as the Proton acceptor.

The protein belongs to the protein kinase superfamily. NEK Ser/Thr protein kinase family. NIMA subfamily. As to quaternary structure, interacts with RAF1 and MAP2K1; the interaction is direct with RAF1 and required for ERK1/2-signaling pathway activation in response to UV irradiation. The cofactor is Mg(2+). As to expression, expressed in the mammary gland, lung, spleen, and kidney.

The enzyme catalyses L-seryl-[protein] + ATP = O-phospho-L-seryl-[protein] + ADP + H(+). It catalyses the reaction L-threonyl-[protein] + ATP = O-phospho-L-threonyl-[protein] + ADP + H(+). In terms of biological role, plays a role in the cellular response to UV irradiation. Mediates G2/M cell cycle arrest, MEK autoactivation and ERK1/2-signaling pathway activation in response to UV irradiation. In ciliated cells, it is involved in the regulation of mucociliary transport. In Mus musculus (Mouse), this protein is Serine/threonine-protein kinase Nek10.